Consider the following 524-residue polypeptide: uncharacterized protein (524 aa).

The first 26 residues, 1–26 (MLKIDMWFKLKSLGFSLISLQALLAS), serve as a signal peptide directing secretion. A lipid anchor (N-palmitoyl cysteine) is attached at C27. C27 is lipidated: S-diacylglycerol cysteine. Positions 37–68 (IEEKNDSTTDNNATPFKDEQSDQGTEVNQQPK) are disordered. Over residues 58–68 (DQGTEVNQQPK) the composition is skewed to polar residues.

The protein belongs to the MG067/MG068/MG395 family.

The protein resides in the cell membrane. This is an uncharacterized protein from Mycoplasma genitalium (strain ATCC 33530 / DSM 19775 / NCTC 10195 / G37) (Mycoplasmoides genitalium).